An 877-amino-acid chain; its full sequence is Ewing's tumor-associated antigen 1 homolog (877 aa).

The interval 1 to 82 (MQLKDGGTGM…GRSPRGKETP (82 aa)) is disordered. Over residues 56 to 65 (AGTRSARRAQ) the composition is skewed to basic residues. A Glycyl lysine isopeptide (Lys-Gly) (interchain with G-Cter in SUMO2) cross-link involves residue Lys-87. The short motif at 107 to 113 (IFWDQNS) is the ATR-activation domain (AAD) element. Coiled coils occupy residues 185–213 (KTKN…IQEQ) and 306–335 (AFLN…LLTE). Residues Lys-416 and Lys-444 each participate in a glycyl lysine isopeptide (Lys-Gly) (interchain with G-Cter in SUMO2) cross-link. Residues 450–479 (PSKTRNGELRNAGEHRFSSHPGDESRKVPF) are disordered. Basic and acidic residues predominate over residues 454–476 (RNGELRNAGEHRFSSHPGDESRK). Ser-467 carries the post-translational modification Phosphoserine. Lys-510 is covalently cross-linked (Glycyl lysine isopeptide (Lys-Gly) (interchain with G-Cter in SUMO2)). The RBM1 motif motif lies at 607–622 (GEVDDDLFCQACDDIE). 2 disordered regions span residues 626 to 664 (QQEN…PSKH) and 818 to 877 (ANQQ…ISLP). Residues 637–662 (SVSYTSTRGSRSSSTASKQASQSAPS) show a composition bias toward low complexity. The segment covering 818–833 (ANQQQSSINYSESLKP) has biased composition (polar residues). Basic and acidic residues predominate over residues 840–859 (ERNRKYSPEEIQRKRQEALV). Positions 843–865 (RKYSPEEIQRKRQEALVRRKAKA) match the RBM2 motif motif. A compositionally biased stretch (polar residues) spans 868–877 (TVQSAPISLP).

In terms of assembly, interacts (via RBM1 motif) with RPA1. Interacts (via RBM2 motif) with RPA2. Interacts (via the ATR-activation domain motif) with ATR. Phosphorylated by ATR.

Its subcellular location is the nucleus. In terms of biological role, replication stress response protein that accumulates at DNA damage sites and promotes replication fork progression and integrity. Recruited to stalled replication forks via interaction with the RPA complex and directly stimulates ATR kinase activity independently of TOPBP1. Probably only regulates a subset of ATR targets. The protein is Ewing's tumor-associated antigen 1 homolog of Mus musculus (Mouse).